The primary structure comprises 29 residues: Cyclotide vibi-B (29 aa).

Positions 1–29 (GLPVCGETCFGGTCNTPGCTCSYPICTRN) form a cross-link, cyclopeptide (Gly-Asn). 3 disulfides stabilise this stretch: Cys-5–Cys-19, Cys-9–Cys-21, and Cys-14–Cys-26.

Post-translationally, this is a cyclic peptide.

Probably participates in a plant defense mechanism. This Viola biflora (Yellow wood violet) protein is Cyclotide vibi-B.